The sequence spans 268 residues: Putative carbamate hydrolase RutD (268 aa).

The AB hydrolase-1 domain occupies 15-119; the sequence is PVMVMIAGLG…VIVNGWLSLS (105 aa).

This sequence belongs to the AB hydrolase superfamily. Hydrolase RutD family.

It carries out the reaction carbamate + 2 H(+) = NH4(+) + CO2. Functionally, involved in pyrimidine catabolism. May facilitate the hydrolysis of carbamate, a reaction that can also occur spontaneously. This Cronobacter sakazakii (strain ATCC BAA-894) (Enterobacter sakazakii) protein is Putative carbamate hydrolase RutD.